The sequence spans 1169 residues: Transcription-repair-coupling factor (1169 aa).

The region spanning 634 to 795 (DMERERPMDR…MLGVRDLSVI (162 aa)) is the Helicase ATP-binding domain. 647 to 654 (GDVGYGKT) contributes to the ATP binding site. Residues 748 to 751 (DEEQ) carry the DEEQ box motif. In terms of domain architecture, Helicase C-terminal spans 809–970 (VLEQNSNFIK…GFKIAMRDLN (162 aa)).

The protein in the N-terminal section; belongs to the UvrB family. This sequence in the C-terminal section; belongs to the helicase family. RecG subfamily.

Its subcellular location is the cytoplasm. Its function is as follows. Couples transcription and DNA repair by recognizing RNA polymerase (RNAP) stalled at DNA lesions. Mediates ATP-dependent release of RNAP and its truncated transcript from the DNA, and recruitment of nucleotide excision repair machinery to the damaged site. The chain is Transcription-repair-coupling factor from Staphylococcus haemolyticus (strain JCSC1435).